Here is a 161-residue protein sequence, read N- to C-terminus: MTKKDKKEVKVQTVTTEDGETVKVFEDLQGFETFIANETEDDDFDHLHCKLNYYPPFVLHESHEDPEKISDAANSHSKKFVRHLHQHIEKHLLKDIKQAVRKPELKFHEKSKEETFDKITWHYGEETEYHGRPFKIDVQVVCTHEDAMVFVDYKTHPVGAN.

K68 participates in a covalent cross-link: Glycyl lysine isopeptide (Lys-Gly) (interchain with G-Cter in ubiquitin).

This sequence belongs to the RGI1 family.

It localises to the cell membrane. Its function is as follows. Involved in the control of energetic metabolism and significantly contribute to cell fitness, especially under respiratory growth conditions. The sequence is that of Respiratory growth induced protein 1 (RGI1) from Saccharomyces cerevisiae (strain RM11-1a) (Baker's yeast).